The following is a 304-amino-acid chain: Non-specific ribonucleoside hydrolase RihC (304 aa).

Residue His233 is part of the active site.

It belongs to the IUNH family. RihC subfamily.

Hydrolyzes both purine and pyrimidine ribonucleosides with a broad-substrate specificity. The polypeptide is Non-specific ribonucleoside hydrolase RihC (Escherichia coli (strain SMS-3-5 / SECEC)).